Here is a 169-residue protein sequence, read N- to C-terminus: Neudesin (169 aa).

An N-terminal signal peptide occupies residues 1 to 28 (MAGPAPGRRLVALALIVALAVGLPTAGA). Residues 41 to 126 (VRLFTEEELA…EELESLDDVF (86 aa)) form the Cytochrome b5 heme-binding domain. Lys133 carries the post-translational modification N6-acetyllysine. Residues 148–169 (DGSPNLDFKPEDQPHFDIKDEF) are disordered. Positions 155–169 (FKPEDQPHFDIKDEF) are enriched in basic and acidic residues.

The protein belongs to the cytochrome b5 family. MAPR subfamily. In terms of assembly, interacts with PINK1 and PARK7.

It is found in the secreted. Its subcellular location is the extracellular space. The protein resides in the mitochondrion. The protein localises to the endoplasmic reticulum. Its function is as follows. Acts as a neurotrophic factor in postnatal mature neurons enhancing neuronal survival. Promotes cell proliferation and neurogenesis in undifferentiated neural progenitor cells at the embryonic stage and inhibits differentiation of astrocytes. Its neurotrophic activity is exerted via MAPK1/ERK2, MAPK3/ERK1 and AKT1/AKT pathways. Neurotrophic activity is enhanced by binding to heme. Also acts as an anorexigenic neurotrophic factor that contributes to energy balance. This chain is Neudesin (NENF), found in Bos taurus (Bovine).